The chain runs to 456 residues: GTPase Der (456 aa).

EngA-type G domains follow at residues 4 to 169 (PIVA…PSKE) and 178 to 353 (IQLA…EQHR). GTP contacts are provided by residues 10–17 (GRPNVGKS), 57–61 (DTGGL), 120–123 (NKCE), 184–191 (GRPNVGKS), 231–235 (DTAGI), and 296–299 (NKWD). The KH-like domain maps to 354 to 439 (RRVSTSVVNE…PLKLFWRGKQ (86 aa)).

The protein belongs to the TRAFAC class TrmE-Era-EngA-EngB-Septin-like GTPase superfamily. EngA (Der) GTPase family. Associates with the 50S ribosomal subunit.

GTPase that plays an essential role in the late steps of ribosome biogenesis. The sequence is that of GTPase Der from Prochlorococcus marinus (strain MIT 9211).